Here is a 345-residue protein sequence, read N- to C-terminus: 3-dehydroquinate synthase (345 aa).

Residues 62–67, 96–100, 120–121, K133, K142, and 160–163 contribute to the NAD(+) site; these read DGEEYK, GVISD, TT, and FLKT. Positions 175, 233, and 250 each coordinate Zn(2+).

This sequence belongs to the sugar phosphate cyclases superfamily. Dehydroquinate synthase family. Requires Co(2+) as cofactor. Zn(2+) serves as cofactor. NAD(+) is required as a cofactor.

The protein resides in the cytoplasm. It carries out the reaction 7-phospho-2-dehydro-3-deoxy-D-arabino-heptonate = 3-dehydroquinate + phosphate. Its pathway is metabolic intermediate biosynthesis; chorismate biosynthesis; chorismate from D-erythrose 4-phosphate and phosphoenolpyruvate: step 2/7. Catalyzes the conversion of 3-deoxy-D-arabino-heptulosonate 7-phosphate (DAHP) to dehydroquinate (DHQ). The protein is 3-dehydroquinate synthase of Campylobacter concisus (strain 13826).